Here is a 208-residue protein sequence, read N- to C-terminus: Uracil phosphoribosyltransferase (208 aa).

5-phospho-alpha-D-ribose 1-diphosphate-binding positions include arginine 78, arginine 103, and 130-138; that span reads DPMLATGVS. Uracil-binding positions include isoleucine 193 and 198 to 200; that span reads GDA. Aspartate 199 provides a ligand contact to 5-phospho-alpha-D-ribose 1-diphosphate.

This sequence belongs to the UPRTase family. It depends on Mg(2+) as a cofactor.

It catalyses the reaction UMP + diphosphate = 5-phospho-alpha-D-ribose 1-diphosphate + uracil. It participates in pyrimidine metabolism; UMP biosynthesis via salvage pathway; UMP from uracil: step 1/1. With respect to regulation, allosterically activated by GTP. Functionally, catalyzes the conversion of uracil and 5-phospho-alpha-D-ribose 1-diphosphate (PRPP) to UMP and diphosphate. The polypeptide is Uracil phosphoribosyltransferase (Thermosipho africanus (strain TCF52B)).